A 238-amino-acid polypeptide reads, in one-letter code: Uridylate kinase (238 aa).

An ATP-binding site is contributed by 12–15 (KLSG). Gly54 serves as a coordination point for UMP. Gly55 and Arg59 together coordinate ATP. UMP is bound by residues Asp74 and 135–142 (TGNPFFTT). ATP contacts are provided by Thr162, Asn163, Tyr168, and Asp171.

This sequence belongs to the UMP kinase family. Homohexamer.

It is found in the cytoplasm. It catalyses the reaction UMP + ATP = UDP + ADP. The protein operates within pyrimidine metabolism; CTP biosynthesis via de novo pathway; UDP from UMP (UMPK route): step 1/1. With respect to regulation, inhibited by UTP. Functionally, catalyzes the reversible phosphorylation of UMP to UDP. The protein is Uridylate kinase of Rhodopseudomonas palustris (strain BisA53).